We begin with the raw amino-acid sequence, 341 residues long: Peptidoglycan recognition protein 3 (341 aa).

Residues 1 to 17 form the signal peptide; that stretch reads MGTLPWLLAFFILGLQA. N-acetylmuramoyl-L-alanine amidase domains follow at residues 77-179 and 200-325; these read TIGW…KVCP and PAKY…ILSP. N-linked (GlcNAc...) asparagine glycosylation is present at asparagine 113. 3 disulfides stabilise this stretch: cysteine 178/cysteine 300, cysteine 194/cysteine 238, and cysteine 214/cysteine 220. The peptidoglycan site is built by histidine 231, arginine 235, and tyrosine 242. Residues 264 to 269 form an interaction with murein region; sequence HTYGFN.

It belongs to the N-acetylmuramoyl-L-alanine amidase 2 family. Monomer. Homodimer; disulfide-linked. Heterodimer with PGLYRP4; disulfide-linked. Post-translationally, N-glycosylated. In terms of tissue distribution, detected in skin epidermis, eccrine sweat glands and ducts, ciliary body epithelial cells of the eye, in small intestine, colon, stomach and in mature epithelial cells of the tongue (at protein level). Highly expressed in skin and esophagus, expressed also in tonsils and thymus and to a much lesser extent in the stomach, descending colon, rectum and brain.

It localises to the secreted. Pattern receptor that binds to murein peptidoglycans (PGN) of Gram-positive bacteria. Has bactericidal activity towards Gram-positive bacteria. May kill Gram-positive bacteria by interfering with peptidoglycan biosynthesis. Also binds to Gram-negative bacteria, and has bacteriostatic activity towards Gram-negative bacteria. Plays a role in innate immunity. The protein is Peptidoglycan recognition protein 3 (PGLYRP3) of Homo sapiens (Human).